We begin with the raw amino-acid sequence, 123 residues long: ATP synthase epsilon chain (123 aa).

This sequence belongs to the ATPase epsilon chain family. In terms of assembly, F-type ATPases have 2 components, CF(1) - the catalytic core - and CF(0) - the membrane proton channel. CF(1) has five subunits: alpha(3), beta(3), gamma(1), delta(1), epsilon(1). CF(0) has three main subunits: a, b and c.

It localises to the cell inner membrane. Functionally, produces ATP from ADP in the presence of a proton gradient across the membrane. This is ATP synthase epsilon chain from Helicobacter pylori (strain HPAG1).